The primary structure comprises 183 residues: Large ribosomal subunit protein bL27m (183 aa).

Residues 1 to 34 (MFLRPTSIPSAVSQIRAQLFAGPSSLASQIQVRW) constitute a mitochondrion transit peptide.

It belongs to the bacterial ribosomal protein bL27 family.

The protein resides in the mitochondrion. In Cryptococcus neoformans var. neoformans serotype D (strain B-3501A) (Filobasidiella neoformans), this protein is Large ribosomal subunit protein bL27m (RPL27).